The following is a 192-amino-acid chain: NADH:FMN oxidoreductase (192 aa).

Residues 1–20 are disordered; it reads MSDKPNAVSSHTTPDVPEVA. Residues 60–63, 77–84, alanine 111, and arginine 117 contribute to the FMN site; these read TATS and NIAETSSS.

The protein belongs to the non-flavoprotein flavin reductase family.

It localises to the cytoplasm. It carries out the reaction FMNH2 + NAD(+) = FMN + NADH + 2 H(+). It participates in sulfur metabolism; dibenzothiophene degradation. Its function is as follows. An NADH:FMN oxidoreductase which supplies reduced FMN for the '4S' desulfurization pathway that removes covalently bound sulfur from dibenzothiophene (DBT) without breaking carbon-carbon bonds. Provides DszA and DszC (DBTO2-monooxygenase and DBT-monooxygenase respectively) with reduced flavin (FMN). This is NADH:FMN oxidoreductase from Rhodococcus erythropolis (Arthrobacter picolinophilus).